A 163-amino-acid polypeptide reads, in one-letter code: Neurotrophin-3 (163 aa).

A signal peptide spans Ile1–Ser3. The propeptide occupies Thr4–Arg119. Asn112 carries N-linked (GlcNAc...) asparagine glycosylation. The disordered stretch occupies residues Asn112–Asp132. The segment covering Ser123 to Asp132 has biased composition (basic and acidic residues).

This sequence belongs to the NGF-beta family.

It localises to the secreted. Its function is as follows. Seems to promote the survival of visceral and proprioceptive sensory neurons. The polypeptide is Neurotrophin-3 (NTF3) (Exiliboa placata (Oaxacan dwarf boa)).